A 360-amino-acid chain; its full sequence is NAD(P)H-quinone oxidoreductase subunit 1, chloroplastic (360 aa).

A run of 8 helical transmembrane segments spans residues 29–49, 96–116, 128–148, 166–186, 204–224, 255–277, 297–317, and 333–353; these read WIPL…LVIV, IWLF…AYLV, ISLG…GLLM, AAQA…ICLL, ILGW…IAAL, GLFY…ILYL, IFAA…FIFL, and LLDL…LLTA.

It belongs to the complex I subunit 1 family. As to quaternary structure, NDH is composed of at least 16 different subunits, 5 of which are encoded in the nucleus.

It is found in the plastid. Its subcellular location is the chloroplast thylakoid membrane. The catalysed reaction is a plastoquinone + NADH + (n+1) H(+)(in) = a plastoquinol + NAD(+) + n H(+)(out). It catalyses the reaction a plastoquinone + NADPH + (n+1) H(+)(in) = a plastoquinol + NADP(+) + n H(+)(out). Functionally, NDH shuttles electrons from NAD(P)H:plastoquinone, via FMN and iron-sulfur (Fe-S) centers, to quinones in the photosynthetic chain and possibly in a chloroplast respiratory chain. The immediate electron acceptor for the enzyme in this species is believed to be plastoquinone. Couples the redox reaction to proton translocation, and thus conserves the redox energy in a proton gradient. The sequence is that of NAD(P)H-quinone oxidoreductase subunit 1, chloroplastic from Chlorokybus atmophyticus (Soil alga).